Here is a 597-residue protein sequence, read N- to C-terminus: Coronatine-insensitive protein homolog 1b (597 aa).

The F-box domain occupies 22–64 (SIPEEALHLVLGYVDDPRDREAVSLVCRRWHRIDALTRKHVTV). Jasmonate contacts are provided by Arg92, Arg353, Tyr391, Arg414, and Arg501.

As to quaternary structure, interacts with TIFY10C/JAZ8 in a coronatine-dependent manner. Interacts with TIFY3/JAZ1, TIFY6A/JAZ3, TIFY6B/JAZ4, TIFY10A/JAZ6, TIFY10B/JAZ7, TIFY11A/JAZ9, TIFY11B/JAZ10, TIFY11C/JAZ11 and TIFY11D/JAZ12 in a coronatine-dependent manner. As to expression, expressed in roots, shoots, leaf sheaths and leaf blades.

Functionally, involved in jasmonate (JA) signaling. Required for jasmonate signaling in plant defense responses. Can complement Arabidopsis coi1-1 mutant and restore jasmonate signaling. Component of SCF(COI1) E3 ubiquitin ligase complexes, which may mediate the ubiquitination and subsequent proteasomal degradation of target proteins, including TIFY/JAZ family. This chain is Coronatine-insensitive protein homolog 1b, found in Oryza sativa subsp. japonica (Rice).